We begin with the raw amino-acid sequence, 72 residues long: Translation initiation factor IF-1 (72 aa).

Positions 1–72 constitute an S1-like domain; the sequence is MAKEDCIEMQ…SKARIIFRAR (72 aa).

Belongs to the IF-1 family. As to quaternary structure, component of the 30S ribosomal translation pre-initiation complex which assembles on the 30S ribosome in the order IF-2 and IF-3, IF-1 and N-formylmethionyl-tRNA(fMet); mRNA recruitment can occur at any time during PIC assembly.

The protein resides in the cytoplasm. Functionally, one of the essential components for the initiation of protein synthesis. Stabilizes the binding of IF-2 and IF-3 on the 30S subunit to which N-formylmethionyl-tRNA(fMet) subsequently binds. Helps modulate mRNA selection, yielding the 30S pre-initiation complex (PIC). Upon addition of the 50S ribosomal subunit IF-1, IF-2 and IF-3 are released leaving the mature 70S translation initiation complex. The polypeptide is Translation initiation factor IF-1 (Haemophilus ducreyi (strain 35000HP / ATCC 700724)).